Reading from the N-terminus, the 87-residue chain is Small ribosomal subunit protein uS15c (87 aa).

Belongs to the universal ribosomal protein uS15 family. Part of the 30S ribosomal subunit.

It is found in the plastid. It localises to the chloroplast. The polypeptide is Small ribosomal subunit protein uS15c (rps15) (Nymphaea alba (White water-lily)).